Here is a 226-residue protein sequence, read N- to C-terminus: UPF0758 protein LL1007 (226 aa).

The 123-residue stretch at 103–225 (QVLSSREYGL…YFSFREEEIR (123 aa)) folds into the MPN domain. His-174, His-176, and Asp-187 together coordinate Zn(2+). The short motif at 174–187 (HNHPSGNLKPSQAD) is the JAMM motif element.

Belongs to the UPF0758 family.

The chain is UPF0758 protein LL1007 from Lactococcus lactis subsp. lactis (strain IL1403) (Streptococcus lactis).